Here is an 87-residue protein sequence, read N- to C-terminus: Hemocyanin alpha chain (87 aa).

It belongs to the tyrosinase family. Hemocyanin subfamily. In terms of assembly, polymer that contains six different types of chains (alpha, beta, gamma, delta, epsilon, and zeta). As to expression, hemolymph.

It localises to the secreted. The protein localises to the extracellular space. Functionally, hemocyanins are copper-containing oxygen carriers occurring freely dissolved in the hemolymph of many mollusks and arthropods. The protein is Hemocyanin alpha chain of Tachypleus tridentatus (Japanese horseshoe crab).